The primary structure comprises 182 residues: Small ribosomal subunit protein uS4c (182 aa).

One can recognise an S4 RNA-binding domain in the interval 82–143 (MRLDNILFRL…KERSKVLIQN (62 aa)).

It belongs to the universal ribosomal protein uS4 family. Part of the 30S ribosomal subunit. Contacts protein S5. The interaction surface between S4 and S5 is involved in control of translational fidelity.

Its subcellular location is the plastid. It localises to the chloroplast. Its function is as follows. One of the primary rRNA binding proteins, it binds directly to 16S rRNA where it nucleates assembly of the body of the 30S subunit. Functionally, with S5 and S12 plays an important role in translational accuracy. This is Small ribosomal subunit protein uS4c (rps4) from Alophia veracruzana (Mexican pine woods lily).